The sequence spans 555 residues: Dihydroxy-acid dehydratase (555 aa).

D78 provides a ligand contact to Mg(2+). C119 lines the [2Fe-2S] cluster pocket. Mg(2+) contacts are provided by D120 and K121. At K121 the chain carries N6-carboxylysine. C192 serves as a coordination point for [2Fe-2S] cluster. E444 is a binding site for Mg(2+). S470 serves as the catalytic Proton acceptor.

The protein belongs to the IlvD/Edd family. In terms of assembly, homodimer. It depends on [2Fe-2S] cluster as a cofactor. Requires Mg(2+) as cofactor.

The catalysed reaction is (2R)-2,3-dihydroxy-3-methylbutanoate = 3-methyl-2-oxobutanoate + H2O. It catalyses the reaction (2R,3R)-2,3-dihydroxy-3-methylpentanoate = (S)-3-methyl-2-oxopentanoate + H2O. The protein operates within amino-acid biosynthesis; L-isoleucine biosynthesis; L-isoleucine from 2-oxobutanoate: step 3/4. It functions in the pathway amino-acid biosynthesis; L-valine biosynthesis; L-valine from pyruvate: step 3/4. Its function is as follows. Functions in the biosynthesis of branched-chain amino acids. Catalyzes the dehydration of (2R,3R)-2,3-dihydroxy-3-methylpentanoate (2,3-dihydroxy-3-methylvalerate) into 2-oxo-3-methylpentanoate (2-oxo-3-methylvalerate) and of (2R)-2,3-dihydroxy-3-methylbutanoate (2,3-dihydroxyisovalerate) into 2-oxo-3-methylbutanoate (2-oxoisovalerate), the penultimate precursor to L-isoleucine and L-valine, respectively. The chain is Dihydroxy-acid dehydratase from Halalkalibacterium halodurans (strain ATCC BAA-125 / DSM 18197 / FERM 7344 / JCM 9153 / C-125) (Bacillus halodurans).